A 234-amino-acid chain; its full sequence is Cyclo(L-leucyl-L-leucyl) synthase (234 aa).

S33 serves as the catalytic Nucleophile. Residues N36, 179–183, Y203, and 208–209 each bind substrate; these read YIFAE and SI.

Belongs to the CDPS family.

The enzyme catalyses 2 L-leucyl-tRNA(Leu) = cyclo(L-leucyl-L-leucyl) + 2 tRNA(Leu) + 2 H(+). In terms of biological role, it uses activated amino acids in the form of aminoacyl-tRNAs (aa-tRNAs) as substrates to catalyze the ATP-independent formation of cyclodipeptides which are intermediates in diketopiperazine (DKP) biosynthetic pathways. Catalyzes the formation of cyclo(L-Leu-L-Leu) (cLL) from L-leucyl-tRNA(Leu). Can incorporate various nonpolar residues, such as L-phenylalanine, L-leucine and L-methionine, into cyclodipeptides. This Photorhabdus laumondii subsp. laumondii (strain DSM 15139 / CIP 105565 / TT01) (Photorhabdus luminescens subsp. laumondii) protein is Cyclo(L-leucyl-L-leucyl) synthase.